A 292-amino-acid chain; its full sequence is Ribosome-inactivating protein saporin-2 (292 aa).

The signal sequence occupies residues 1–24 (MKIYVVATIAWILLQFSAWTTTDA). The active site involves E200.

Belongs to the ribosome-inactivating protein family. Type 1 RIP subfamily.

The enzyme catalyses Endohydrolysis of the N-glycosidic bond at one specific adenosine on the 28S rRNA.. Functionally, ribosome-inactivating protein of type 1, inhibits protein synthesis in animal cells. Useful as immunotoxin for pharmacological applications. The sequence is that of Ribosome-inactivating protein saporin-2 (SAP2) from Saponaria officinalis (Common soapwort).